The following is a 208-amino-acid chain: Coiled-coil domain-containing protein 25 (208 aa).

Over Met-1–Asp-105 the chain is Extracellular. Residues Lys-21–Glu-25 form a DNA-binding region. Lys-23 is modified (N6-acetyllysine). The helical transmembrane segment at Val-106 to Val-122 threads the bilayer. Residues Val-117–Ser-187 adopt a coiled-coil conformation. Topologically, residues Glu-123 to Met-208 are cytoplasmic. Positions Leu-144–Arg-184 are enriched in basic and acidic residues. Positions Leu-144 to Met-208 are disordered. A Phosphoserine modification is found at Ser-204.

This sequence belongs to the CCDC25 family. Interacts (via cytoplasmic region) with ILK.

Its subcellular location is the cell membrane. It localises to the endomembrane system. In terms of biological role, transmembrane receptor that senses neutrophil extracellular traps (NETs) and triggers the ILK-PARVB pathway to enhance cell motility. NETs are mainly composed of DNA fibers and are released by neutrophils to bind pathogens during inflammation. Formation of NETs is also associated with cancer metastasis, NET-DNA acting as a chemotactic factor to attract cancer cells. Specifically binds NETs on its extracellular region, in particular the 8-OHdG-enriched DNA present in NETs, and recruits ILK, initiating the ILK-PARVB cascade to induce cytoskeleton rearrangement and directional migration of cells. In the context of cancer, promotes cancer metastasis by sensing NETs and promoting migration of tumor cells. This is Coiled-coil domain-containing protein 25 from Mus musculus (Mouse).